The following is a 433-amino-acid chain: Epi-neemfruitin B synthase L1AT (433 aa).

Residues His151 and Asp372 each act as proton acceptor in the active site.

Belongs to the plant acyltransferase family. In terms of assembly, monomer. As to expression, mainly expressed in petioles and, to a lower extent, in roots.

The enzyme catalyses (21S)-21-acetyl-1-hydroxy-apo-melianone + acetyl-CoA = epi-neemfruitin B + acetate + CoA + H(+). It participates in secondary metabolite biosynthesis; terpenoid biosynthesis. Acetyltransferase involved in the biosynthesis of limonoids triterpene natural products such as azadirachtin, an antifeedant widely used as bioinsecticide, and possessing many medicinal applications including anti-tumoral, anti-malarial, anti-rheumatic, antibacterial, anti-inflammatory, anti-pyretic and diuretic effects. Catalyzes the formation of epi-neemfruitin B from (21S)-21-acetyl-1-hydroxy-apo-melianone. The chain is Epi-neemfruitin B synthase L1AT from Melia azedarach (Chinaberry tree).